The sequence spans 505 residues: Lysine--tRNA ligase, heat inducible (505 aa).

N6-acetyllysine occurs at positions 114 and 156. Mg(2+) contacts are provided by E415 and E422.

The protein belongs to the class-II aminoacyl-tRNA synthetase family. In terms of assembly, homodimer. Mg(2+) serves as cofactor.

The protein localises to the cytoplasm. It catalyses the reaction tRNA(Lys) + L-lysine + ATP = L-lysyl-tRNA(Lys) + AMP + diphosphate. The sequence is that of Lysine--tRNA ligase, heat inducible (lysU) from Escherichia coli O157:H7.